Reading from the N-terminus, the 44-residue chain is Large ribosomal subunit protein bL34 (44 aa).

This sequence belongs to the bacterial ribosomal protein bL34 family.

This is Large ribosomal subunit protein bL34 from Neorickettsia sennetsu (strain ATCC VR-367 / Miyayama) (Ehrlichia sennetsu).